Here is a 381-residue protein sequence, read N- to C-terminus: MASPSLERPEKGAGKSEFRNQKPKPENQDESELLTVPDGWKEPAFSKEDNPRGLLEESSFATLFPKYREAYLKECWPLVQKALNEHHVNATLDLIEGSMTVCTTKKTFDPYIIIRARDLIKLLARSVSFEQAVRILQDDVACDIIKIGSLVRNKERFVKRRQRLIGPKGSTLKALELLTNCYIMVQGNTVSAIGPFSGLKEVRKVVLDTMKNIHPIYNIKSLMIKRELAKDSELRSQSWERFLPQFKHKNVNKRKEPKKKTVKKEYTPFPPPQPESQIDKELASGEYFLKANQKKRQKMEAIKAKQAEAISKRQEERNKAFIPPKEKPIVKPKEASTETKIDVASIKEKVKKAKNKKLGALTAEEIALKMEADEKKKKKKK.

A disordered region spans residues 1–51; the sequence is MASPSLERPEKGAGKSEFRNQKPKPENQDESELLTVPDGWKEPAFSKEDNP. Residue Ala-2 is modified to N-acetylalanine. Phosphoserine occurs at positions 3 and 5. Composition is skewed to basic and acidic residues over residues 7–27 and 39–51; these read ERPE…KPEN and GWKE…EDNP. Lys-24 is covalently cross-linked (Glycyl lysine isopeptide (Lys-Gly) (interchain with G-Cter in SUMO2)). The region spanning 154-206 is the KH domain; that stretch reads KERFVKRRQRLIGPKGSTLKALELLTNCYIMVQGNTVSAIGPFSGLKEVRKVV. The span at 250-262 shows a compositional bias: basic residues; the sequence is NVNKRKEPKKKTV. Disordered regions lie at residues 250–278 and 309–338; these read NVNK…ESQI and AISK…ASTE. Residues Lys-340 and Lys-369 each participate in a glycyl lysine isopeptide (Lys-Gly) (interchain with G-Cter in SUMO2) cross-link.

The protein belongs to the KRR1 family. Part of the small subunit (SSU) processome, composed of more than 70 proteins and the RNA chaperone small nucleolar RNA (snoRNA) U3. In terms of assembly, (Microbial infection) Directly interacts with HIV-1 protein VPR. Also identified in a complex with NR3C1 and HIV-1 protein VPR.

It localises to the nucleus. It is found in the nucleolus. The protein localises to the cytoplasm. In terms of biological role, part of the small subunit (SSU) processome, first precursor of the small eukaryotic ribosomal subunit. During the assembly of the SSU processome in the nucleolus, many ribosome biogenesis factors, an RNA chaperone and ribosomal proteins associate with the nascent pre-rRNA and work in concert to generate RNA folding, modifications, rearrangements and cleavage as well as targeted degradation of pre-ribosomal RNA by the RNA exosome. The polypeptide is KRR1 small subunit processome component homolog (Homo sapiens (Human)).